Consider the following 475-residue polypeptide: Ribulose bisphosphate carboxylase large chain (475 aa).

A propeptide spanning residues 1 to 2 is cleaved from the precursor; it reads MS. N-acetylproline is present on Pro-3. Lys-14 bears the N6,N6,N6-trimethyllysine mark. Positions 123 and 173 each coordinate substrate. The Proton acceptor role is filled by Lys-175. Substrate is bound at residue Lys-177. Residues Lys-201, Asp-203, and Glu-204 each coordinate Mg(2+). Residue Lys-201 is modified to N6-carboxylysine. His-294 (proton acceptor) is an active-site residue. The substrate site is built by Arg-295, His-327, and Ser-379.

Belongs to the RuBisCO large chain family. Type I subfamily. Heterohexadecamer of 8 large chains and 8 small chains; disulfide-linked. The disulfide link is formed within the large subunit homodimers. The cofactor is Mg(2+). The disulfide bond which can form in the large chain dimeric partners within the hexadecamer appears to be associated with oxidative stress and protein turnover.

The protein resides in the plastid. It localises to the chloroplast. The catalysed reaction is 2 (2R)-3-phosphoglycerate + 2 H(+) = D-ribulose 1,5-bisphosphate + CO2 + H2O. It carries out the reaction D-ribulose 1,5-bisphosphate + O2 = 2-phosphoglycolate + (2R)-3-phosphoglycerate + 2 H(+). RuBisCO catalyzes two reactions: the carboxylation of D-ribulose 1,5-bisphosphate, the primary event in carbon dioxide fixation, as well as the oxidative fragmentation of the pentose substrate in the photorespiration process. Both reactions occur simultaneously and in competition at the same active site. The polypeptide is Ribulose bisphosphate carboxylase large chain (Pinus balfouriana (Foxtail pine)).